The sequence spans 173 residues: NADH-ubiquinone oxidoreductase chain 6 (173 aa).

Helical transmembrane passes span 1 to 21 (MTYF…AVAS), 27 to 47 (YGVV…LSLG), 48 to 68 (VSFV…VVFV), 87 to 107 (VVGY…VGGF), 113 to 133 (FGVV…FSGV), and 139 to 159 (CGVG…FVVL).

The protein belongs to the complex I subunit 6 family.

The protein resides in the mitochondrion membrane. It catalyses the reaction a ubiquinone + NADH + 5 H(+)(in) = a ubiquinol + NAD(+) + 4 H(+)(out). In terms of biological role, core subunit of the mitochondrial membrane respiratory chain NADH dehydrogenase (Complex I) that is believed to belong to the minimal assembly required for catalysis. Complex I functions in the transfer of electrons from NADH to the respiratory chain. The immediate electron acceptor for the enzyme is believed to be ubiquinone. This Cepphus grylle (Black guillemot) protein is NADH-ubiquinone oxidoreductase chain 6 (MT-ND6).